We begin with the raw amino-acid sequence, 531 residues long: L-aspartate oxidase (531 aa).

Residues 11–14, Lys-33, 40–47, 151–152, and Asp-205 each bind FAD; these read SGAA, NSVYAQGG, and TA. The Proton donor/acceptor role is filled by Arg-272. FAD contacts are provided by residues Glu-353 and 369–370; that span reads SL.

It belongs to the FAD-dependent oxidoreductase 2 family. NadB subfamily. As to quaternary structure, monomer. Homodimer. The cofactor is FAD.

It is found in the cytoplasm. The catalysed reaction is L-aspartate + O2 = iminosuccinate + H2O2. It catalyses the reaction fumarate + L-aspartate = iminosuccinate + succinate. Its pathway is cofactor biosynthesis; NAD(+) biosynthesis; iminoaspartate from L-aspartate (oxidase route): step 1/1. Functionally, catalyzes the oxidation of L-aspartate to iminoaspartate, the first step in the de novo biosynthesis of NAD(+). Can use either oxygen or fumarate as electron acceptors, which allows the enzyme to be functional under aerobic and anaerobic conditions. The sequence is that of L-aspartate oxidase from Bacillus subtilis (strain 168).